A 405-amino-acid chain; its full sequence is Imidazolonepropionase (405 aa).

Fe(3+) is bound by residues H70 and H72. H70 and H72 together coordinate Zn(2+). Positions 79, 142, and 175 each coordinate 4-imidazolone-5-propanoate. Residue Y142 coordinates N-formimidoyl-L-glutamate. H240 lines the Fe(3+) pocket. H240 provides a ligand contact to Zn(2+). Q243 contributes to the 4-imidazolone-5-propanoate binding site. D315 contributes to the Fe(3+) binding site. D315 contributes to the Zn(2+) binding site. N-formimidoyl-L-glutamate contacts are provided by N317 and G319. Position 320 (T320) interacts with 4-imidazolone-5-propanoate.

It belongs to the metallo-dependent hydrolases superfamily. HutI family. Requires Zn(2+) as cofactor. The cofactor is Fe(3+).

Its subcellular location is the cytoplasm. It carries out the reaction 4-imidazolone-5-propanoate + H2O = N-formimidoyl-L-glutamate. The protein operates within amino-acid degradation; L-histidine degradation into L-glutamate; N-formimidoyl-L-glutamate from L-histidine: step 3/3. Its function is as follows. Catalyzes the hydrolytic cleavage of the carbon-nitrogen bond in imidazolone-5-propanoate to yield N-formimidoyl-L-glutamate. It is the third step in the universal histidine degradation pathway. The chain is Imidazolonepropionase from Ectopseudomonas mendocina (strain ymp) (Pseudomonas mendocina).